Here is a 979-residue protein sequence, read N- to C-terminus: Putative transcription initiation factor TFIID 111 kDa subunit (979 aa).

Serine 244 is subject to Phosphoserine.

In terms of assembly, TFIID is composed of TATA binding protein (TBP) and a number of TBP-associated factors (TAFs).

It is found in the nucleus. Functionally, TAFs are components of the transcription factor IID (TFIID) complex that are essential for mediating regulation of RNA polymerase transcription. The protein is Putative transcription initiation factor TFIID 111 kDa subunit of Schizosaccharomyces pombe (strain 972 / ATCC 24843) (Fission yeast).